The chain runs to 464 residues: Arginine biosynthesis bifunctional protein ArgJ, mitochondrial (464 aa).

Residues 1-22 (MAASFKALPQQLTLTRSFARCY) constitute a mitochondrion transit peptide. Substrate is bound by residues Thr-193, Lys-222, Thr-233, Glu-320, Asn-459, and Thr-464. The Nucleophile role is filled by Thr-233.

The protein belongs to the ArgJ family. Heterodimer of an alpha and a beta chain. The alpha and beta chains are autoproteolytically processed from a single precursor protein within the mitochondrion.

Its subcellular location is the mitochondrion matrix. The enzyme catalyses N(2)-acetyl-L-ornithine + L-glutamate = N-acetyl-L-glutamate + L-ornithine. The catalysed reaction is L-glutamate + acetyl-CoA = N-acetyl-L-glutamate + CoA + H(+). It functions in the pathway amino-acid biosynthesis; L-arginine biosynthesis; L-ornithine and N-acetyl-L-glutamate from L-glutamate and N(2)-acetyl-L-ornithine (cyclic): step 1/1. Its pathway is amino-acid biosynthesis; L-arginine biosynthesis; N(2)-acetyl-L-ornithine from L-glutamate: step 1/4. Catalyzes two activities which are involved in the cyclic version of arginine biosynthesis: the synthesis of acetylglutamate from glutamate and acetyl-CoA, and of ornithine by transacetylation between acetylornithine and glutamate. The polypeptide is Arginine biosynthesis bifunctional protein ArgJ, mitochondrial (Verticillium alfalfae (strain VaMs.102 / ATCC MYA-4576 / FGSC 10136) (Verticillium wilt of alfalfa)).